We begin with the raw amino-acid sequence, 232 residues long: Probable dihydroorotate dehydrogenase B (NAD(+)), electron transfer subunit (232 aa).

The FAD-binding FR-type domain maps to 1-86; it reads MYYTRITQIE…RGAFGSAFTP (86 aa). Residues Cys202, Cys207, Cys210, and Cys219 each contribute to the [2Fe-2S] cluster site.

It belongs to the PyrK family. As to quaternary structure, heterotetramer of 2 PyrK and 2 PyrD type B subunits. [2Fe-2S] cluster is required as a cofactor. FAD serves as cofactor.

It participates in pyrimidine metabolism; UMP biosynthesis via de novo pathway; orotate from (S)-dihydroorotate (NAD(+) route): step 1/1. In terms of biological role, responsible for channeling the electrons from the oxidation of dihydroorotate from the FMN redox center in the PyrD type B subunit to the ultimate electron acceptor NAD(+). In Archaeoglobus fulgidus (strain ATCC 49558 / DSM 4304 / JCM 9628 / NBRC 100126 / VC-16), this protein is Probable dihydroorotate dehydrogenase B (NAD(+)), electron transfer subunit.